Here is an 83-residue protein sequence, read N- to C-terminus: Kunitz-type serine protease inhibitor homolog mulgin-1 (83 aa).

The N-terminal stretch at 1-24 (MSSGGLLLLLGLLTLWEVLTPVSS) is a signal peptide. The 51-residue stretch at 31–81 (CELPADPGPCNGLFQAFYYNPVQRTCLKFRYGGCKGNPNTFKTIEECKRTC) folds into the BPTI/Kunitz inhibitor domain. 3 disulfide bridges follow: C31–C81, C40–C64, and C56–C77.

The protein belongs to the venom Kunitz-type family. Expressed by the venom gland.

The protein localises to the secreted. Its function is as follows. Serine protease inhibitor homolog that only shows inhibitory activity against MMP2. The chain is Kunitz-type serine protease inhibitor homolog mulgin-1 from Pseudechis australis (Mulga snake).